We begin with the raw amino-acid sequence, 175 residues long: Inorganic pyrophosphatase (175 aa).

Residues Lys-29, Arg-43, and Tyr-55 each contribute to the substrate site. 3 residues coordinate Mg(2+): Asp-65, Asp-70, and Asp-102. Tyr-141 contacts substrate.

It belongs to the PPase family. As to quaternary structure, homohexamer. It depends on Mg(2+) as a cofactor.

The protein resides in the cytoplasm. The enzyme catalyses diphosphate + H2O = 2 phosphate + H(+). Functionally, catalyzes the hydrolysis of inorganic pyrophosphate (PPi) forming two phosphate ions. This Rickettsia bellii (strain RML369-C) protein is Inorganic pyrophosphatase.